We begin with the raw amino-acid sequence, 210 residues long: Phosphoheptose isomerase (210 aa).

One can recognise an SIS domain in the interval 38-202 (IAACLARGGK…ENVAALAPYL (165 aa)). Residue 53–55 (NGG) participates in substrate binding. Residues histidine 62 and glutamate 66 each coordinate Zn(2+). Substrate is bound by residues glutamate 66, 95–96 (ND), 121–123 (STS), serine 126, and glutamine 173. Zn(2+) contacts are provided by glutamine 173 and histidine 181.

It belongs to the SIS family. GmhA subfamily. In terms of assembly, homotetramer. Zn(2+) serves as cofactor.

Its subcellular location is the cytoplasm. The catalysed reaction is 2 D-sedoheptulose 7-phosphate = D-glycero-alpha-D-manno-heptose 7-phosphate + D-glycero-beta-D-manno-heptose 7-phosphate. Its pathway is carbohydrate biosynthesis; D-glycero-D-manno-heptose 7-phosphate biosynthesis; D-glycero-alpha-D-manno-heptose 7-phosphate and D-glycero-beta-D-manno-heptose 7-phosphate from sedoheptulose 7-phosphate: step 1/1. Functionally, catalyzes the isomerization of sedoheptulose 7-phosphate in D-glycero-D-manno-heptose 7-phosphate. The sequence is that of Phosphoheptose isomerase from Desulfovibrio desulfuricans (strain ATCC 27774 / DSM 6949 / MB).